The chain runs to 66 residues: Cytoplasmic envelopment protein 3 (66 aa).

Residue Gly2 is the site of N-myristoyl glycine; by host attachment.

The protein belongs to the herpesviridae cytoplasmic envelopment protein 3 family. As to quaternary structure, interacts with cytoplasmic envelopment protein 2; this interaction is essential for the proper localization of each protein to the assembly complex and thus for the production of infectious virus. Post-translationally, phosphorylated. Phosphorylation does not seem to be required for recycling to the host Golgi apparatus. Packaging is selective for underphosphorylated forms.

It localises to the virion tegument. It is found in the virion membrane. The protein localises to the host cell membrane. The protein resides in the host Golgi apparatus membrane. In terms of biological role, plays an important role in the cytoplasmic envelopment of tegument proteins and capsids during the assembly and egress processes. Also participates in viral entry at the fusion step probably by regulating the core fusion machinery. The chain is Cytoplasmic envelopment protein 3 (38) from Saimiriine herpesvirus 2 (strain 11) (SaHV-2).